We begin with the raw amino-acid sequence, 487 residues long: Betaine aldehyde dehydrogenase (487 aa).

K(+) is bound by residues I27 and D93. Position 149 to 151 (149 to 151 (GAW)) interacts with NAD(+). K161 functions as the Charge relay system in the catalytic mechanism. NAD(+) contacts are provided by residues 175–178 (KPSE) and 228–231 (SVPT). Residue L243 participates in K(+) binding. The active-site Proton acceptor is the E249. Positions 251, 283, and 384 each coordinate NAD(+). The active-site Nucleophile is the C283. C283 carries the cysteine sulfenic acid (-SOH) modification. The K(+) site is built by K454 and G457. Catalysis depends on E461, which acts as the Charge relay system.

Belongs to the aldehyde dehydrogenase family. As to quaternary structure, dimer of dimers. K(+) serves as cofactor.

The enzyme catalyses betaine aldehyde + NAD(+) + H2O = glycine betaine + NADH + 2 H(+). The protein operates within amine and polyamine biosynthesis; betaine biosynthesis via choline pathway; betaine from betaine aldehyde: step 1/1. Its function is as follows. Involved in the biosynthesis of the osmoprotectant glycine betaine. Catalyzes the irreversible oxidation of betaine aldehyde to the corresponding acid. This Brucella anthropi (strain ATCC 49188 / DSM 6882 / CCUG 24695 / JCM 21032 / LMG 3331 / NBRC 15819 / NCTC 12168 / Alc 37) (Ochrobactrum anthropi) protein is Betaine aldehyde dehydrogenase.